Reading from the N-terminus, the 4485-residue chain is MALDNRHRLIVGKLAEAFGLPENVIEKTLTQDKQAVNSFFTPAGPPSLVFVYQVKEDKLKDGSVGPVDNKPTLHRIGPHERIHNSVYFTRLNPKGINEKTLEADMGSGELSVLWALENFKAIVSDLYLPIMQEQQQWGKMSTEYLEDFLSSTAKFGSMLTEAVATVSGGVEPMPDPRYIDQYGDLRPAGITQAAGDDDTLQEMEECLTEWCREAELLLNQTNKIKDGEERGPDTELEYWRTRMSNFNSITEHLKTKECKLVLGICSHAKTKAYLRWRGLDVQITDAANESKDNVKYLATLEKSMEPMYQGRVTDITESLPALMTNVRMMYTIARFYSTAEHMTRLFTKITNQLVRRCKEQIMENGKIWDQDKVTLIGNMKVSVELANVYRQQYRLAKETLAAQPKSKQFDFDEQAIFLKFDLSSKALHKLIDMFTTIHQFSSLEQHTHIEGLDTMLKSLNNIIDDVKRKPYDLLDYSRNAFDTDFLEFNVQINDLELQLQGFVNASFEHITSTEHALSLLAQFQAIMQRETLQQDLENKYMVIFQNYAKDLDAVQKLYEKNKYEPPVPRNAPPVAGNIMWARQLLRRIEAPMQLAQNKNLLAAKESKKNIKTYNKVAKALIEFETLWHQAWIKSIEQCKAGLAAPLLVQHPDTGKILVNFDKEIMQLVREAKYMQRFNIRCSSPSQMVLLQEEKFKFYHNQLTHLVREYEHVLGRGATIKPLLRPHLDDMERKIAPGFAVLTWTSLNIDGYLHRFKQGLARLEELVRKVVDLTENRVDSNLGAISSTLLVELPTDRSFTYEGFVEQNRFQKKQAELLAIRNEEVRRAIEDLYTLVRNYPRENTEDVLDEKEVSLLVRHYSKNMYNAIMQCTLNSLQAMKRRLGSKTTTGIFFMERPFFDVDVELKVPSVCMNPTLEEIQAAINQCAKKVLTISKQLPAWGMDNVATYHEMMRGDRRWVKAVLRLTGSVEGIKTQVGEYIRTFDKYDFLWKEDLQAAYDHFMRSNPTLEAFEAELKKYMAIETEVTMINGVNNIGALSLETHPLKNSLKAEAVSWKTQFAQNLHKQCSDDLKLDNYIRDTNSKFHRKIEDLEDVRNVMAVLKEVREKESEIDNLIGPIEEMYGLLMRYEVRVPKEETTMVSDLRYGWKKLKKVATEVSDNLTRLQVGFKRELIKEVKTFVVDAQMFRKDWEANAMVPGLDPQEAVDRLRKFQQMFEVRKRKWENYSSGEELFGLPVTQYPELEQTEKEIQMLDRLYSLYVAVITTIKGYGDYFWVDVVEKIDEMGEQVQQYQNQSKKLPKLRDWPAYNACRKTIDDFLEMLPLFQALTHKSMRERHWKEVMRVTGHELNLAEDHFKLQHLLDCNVLRYREDIEDLTGAAVKEEIIEVKLNQLKADWATANLALAEYKNRGPVILKPSDTSELMEKLEESQMTLGSMATNRYSAPFRDEVQAWSIKLSTVSEIIEQWLMVQSMWQYMEAVFSGGDIVKQLPQEAKRFLNIDKNFMKIVSNALETQNVINTCFGNELMKNMLPHLHEQLEMCQKSLSAYLEQKRAEFPRFTCVGPHLLEICRWAHDPPSVVPHFQSGLFDSLSNVTFDRIDKTRMTEMFSQQNEKVEFERPVDAKGNIEVWLQRLVDGMEDTVKQIIKRAVRNVAEMPLEDFVFGHPAQVSLLGIQFQWTAETQMALSSAKVDKTIMNKNMKKVDALLRDMVNITVRLDLTKNQRTNLETCITVHMHQKESTEDLVKKKIKDPTDFEWLKQVRFYWRDDKDTVIISICDVDFEYSFEYLGVKERLVITPLTDICYITLSQALGMFLGGAPAGPAGTGKTETTKDLGNTLGKYVVVFNCSDQFDYTYMGKIYKGLAQSGLWGCFDEFNRINLDVLSVCAQQVYCICRTRERKKSFQFTDGTTVSLDPRVGFFITMNPGYAGAQELPENLKALFRGVTMMVPNRQIIMKVKLAAAGYQENDILSKKFFVLYGLCEQQLSKQAHYDFGLRNILSVLRTAGASKRQSPDKSEVFLMMRTVRDMNMSKFVAEDVPLFLSLIDDLFPGLKADATRPDVNKDAEKVVLERGLQVHPTWMNKCIQLYETYLVRHGIMLVGPSGSGKSAICECLAAALTELGTKHVIWRMNPKAITAPQMFGRRDDTTGDWTDGIFAVLWRRAAKNKNQNTWIVLDGPVDAIWIENLNTVLDDNKVLTLANGDRILMSAAMKAMFEPENLNNASPATVSRAGIIYVSDVELGWEPPVKSWLQKRDPTEACWARLFSKYIDRMLEFVRISLKPVMYNEQVSIVGTVMTLLNGYLKSMKEAGTAMNDAKYERVFLYCMTWSLGGLLEMKERPLFDQELRTFAHNMPPKEEDSDTIFEFLVNTTDAEWLHWRHCVPVWTYPKNEEKPQYAQLVIPTLDSVRYGALLNLSYNVDKATLLVGGPGTAKTNTINQFISKFNAETTANKTITFSSLTTPGIFQMSIEGAVEKRQGRTFGPPGGKQMCIFVDDISMPYINEWGHQVTNEIVRQLLEQGGMYSLEKPIGDMKFITDVRYVAAMNTPGGGKNDIPNRLKRQFAIFNVPLPSVAAINGIFGKLVEGRFSRDVFCEEVVYVASKLVPLTITLWNRIQTKMLPTPAKFHYLFNMRELSKVFQGVILATRDRFNLAAGDSAVFGGNVASPEGYLLGLWIHECRRVFSDKLISYEDKNWVDKAVFDLCRDNFSSDLVKQVEEPIYFVDFLREPAVMMRPVEIVTPHPSFYYSVPGGLPEVRARVEGLQRKFNEESKVMKLELVLFTDCVTHLMRITRLLAWPGLGLLVGVGGSGKQSLSRLSAYIAGPTFYITKTYNVSNLFEHIKGLYKIAGFKGQPVYFIFTDAEVKDEGFLEYINQILMTGEVAGLLTKEDQDMIVNDIRPVMKHQAPGILDTYDNLYNFFLNRVRDNLHVVLCFSPVGAKFARRAQQFPGLINGCTIDWFCPGPKKRLTSVSGKFIDKFTMACPKEVKNQLELLMGHAHVFVTAACKEYFEKYRRYVYVTPKSYLSFLQGYKELYAKKWSFTKELAYQIEVACQKMFEPKADVNKMKAELAVKNQTAVSAKEAEALLKQISESTAIAEKEKQKVAVIVDAVTKKASEIATVKDDAERDLAAAKPALDAALEALNSIKDGDIKNLKALKKPPQIITRIFDCVLVLRMLPVTKAEYTDEKGRMVQVGNYPEAQKMMNQMSFLQDLKDFAKEQINDETVELLEPYFMSEDFTFENAQKGSGNVAGLCNWAESMAKYHNVAKVVEPKIAKLREAEAELKLATKEKNAAEERMAKVQAKLDEMQAQFDAAMAHKQALEDDAAATQRKMDSANALIGALAGEEARWTAQSKEFDVQIQRLTGDCALASAFVSYLGPFNKEFRELLLNRDFYGDCMKLNVPVTPHLQITKFLVDDSEVGEWNLQGLPTDELSIQNGIMVTRASRYPVLVDPQGQGREWIKNREEANQLKTTQLNDKLFRNHLEECLAFGRPLLIENIEEELDPLLDPVLERRLVKKGKTWVVPLADKEVDFTETFRLFCTTRLPNPHFTPELSAKVTVVDFTVTMAGLEDQLLGKLISKEKKELEDQRQQLLEEVQSYKKRIKQLEDDLLCRLSNSQGNLLDEHQELIDVLAVTKQTAQDVSEKLANASETNKRINEACEEYRPVAHRATLLYFLIAEFSVVNCMYQTSLAQFNQLYELAIDRSEKANMPSKRIHNIIEYMTYEIYLYVQRGLFERHKIIFALMLTNKVLTSAGKVKATDLDVFLKGGAALDINSVRKKPKDWIPDLVWLNIIALSAMDAFRDIPDSVFRNDGLWRQWYDQEAPEMAKVPDYEDRLNKFERMCVVKTFREDRTLIAAADYIAEALGQRFVESVPLNMEKRPGRRAMAKCPLICLLSPGPDPTKLIEDLAKKKKIKTLGVSMGQGQEVIARKHMAAASLEGHWVLLQNTHLGLGYLTEVETFLVKEENVHEDFRLWITAEPHPQFPIGLLQMGIKITNEAPVGIKAGLRASYQWVNQDMLDMVSRQEWRQLLFVMCFLHSVVQEPQFGPIGWNVPYEFNQSDLSACVQFLQNHLSEMDAKKAPQPTWETVRYMISAIQYGSRITDDFDKLLMDTFAEKYFLQPVLQPSYELFKDTRSSDGFSYRVPDSTDIETFGSYIETLPGTESPEIFGLHPNADITFRTLQVQESIVTILDTMPKGAGSGSGLSREDVVDKICEDLLSKAPPLFDKEETKEKLKKLPGGPTLPLTVHLRQEIDRLNIVTRLTTTTLKNLALAIAGTIAAERGLIDALDALFNARIPQQWLSKSWEASTLGNWFTGLLQRYDQLNKWLNLGRPKAYWMTGFFNPQGFLTAMKQEVNRKHRDKWALDDVVMSSEVTHRPKDFESLKEGAPEGVYVYGLYLDLRLDGRENRLMDSDPKKLFNPLPVLHVDGVLAKDKKRSGLYEAPKPYRVKARKGLNFITTFSVRTEDDKSKWILPGVGILCSID.

A stem region spans residues 1–1780; that stretch reads MALDNRHRLI…IISICDVDFE (1780 aa). Coiled coils occupy residues 449-469, 804-838, 1093-1114, 1275-1297, and 1699-1727; these read IEGL…VKRK, VEQN…VRNY, VRNV…DNLI, DVVE…SKKL, and KKVD…NLET. AAA stretches follow at residues 1781–2002, 2061–2279, 2384–2638, and 2763–3013; these read YSFE…VLRT, KDAE…ISLK, TYPK…VFQG, and KFNE…YRRY. ATP is bound by residues 1819-1826, 2099-2106, 2425-2432, and 2802-2809; these read GPAGTGKT, GPSGSGKS, GGPGTAKT, and GVGGSGKQ. Coiled coils occupy residues 3077–3099, 3196–3227, 3265–3343, and 3569–3663; these read AKEA…KEKQ, EAQK…ELLE, KVVE…LAGE, and EDQL…EEYR. A stalk region spans residues 3077–3343; the sequence is AKEAEALLKQ…NALIGALAGE (267 aa). AAA stretches follow at residues 3412–3643 and 3857–4071; these read LVDD…DVSE and AADY…FLQN.

It belongs to the dynein heavy chain family. As to quaternary structure, consists of at least 3 heavy chains (alpha, beta and gamma), 2 intermediate chains and 8 light chains.

It localises to the cell projection. Its subcellular location is the cilium. The protein resides in the flagellum. The protein localises to the cytoplasm. It is found in the cytoskeleton. It localises to the flagellum axoneme. Its function is as follows. Force generating protein of eukaryotic cilia and flagella. Produces force towards the minus ends of microtubules. Dynein has ATPase activity; the force-producing power stroke is thought to occur on release of ADP. The chain is Dynein gamma chain, flagellar outer arm (ODA2) from Chlamydomonas reinhardtii (Chlamydomonas smithii).